A 521-amino-acid chain; its full sequence is Non-specific phospholipase C5 (521 aa).

Over residues 478-487 (SKKARERGGD) the composition is skewed to basic and acidic residues. The disordered stretch occupies residues 478 to 521 (SKKARERGGDENDIVFCVDDDDDHNVVKPPPSQSEPSHATPWSN). Residues 511–521 (SEPSHATPWSN) are compositionally biased toward polar residues.

Belongs to the bacterial phospholipase C family. In terms of tissue distribution, specifically expressed in flowers.

It localises to the cytoplasm. It is found in the cytosol. The catalysed reaction is a 1,2-diacyl-sn-glycero-3-phosphocholine + H2O = phosphocholine + a 1,2-diacyl-sn-glycerol + H(+). In terms of biological role, non-specific phospholipase C (PLC) which assumes minor PLC activity during inorganic phosphate starvation. Can hydrolyze both phosphatidylcholine (PC) and phosphatidylethanolamine (PE). Required for normal accumulation of digalactosyldiacylglycerol (DGDG) during phosphate limitation and may contribute to the conversion of phospholipids to diacylglycerol, the substrate for galactolipid synthesis. The polypeptide is Non-specific phospholipase C5 (NPC5) (Arabidopsis thaliana (Mouse-ear cress)).